The chain runs to 303 residues: Glycine--tRNA ligase alpha subunit (303 aa).

This sequence belongs to the class-II aminoacyl-tRNA synthetase family. Tetramer of two alpha and two beta subunits.

The protein resides in the cytoplasm. The catalysed reaction is tRNA(Gly) + glycine + ATP = glycyl-tRNA(Gly) + AMP + diphosphate. In Streptococcus equi subsp. zooepidemicus (strain H70), this protein is Glycine--tRNA ligase alpha subunit.